We begin with the raw amino-acid sequence, 435 residues long: Probable glycine dehydrogenase (decarboxylating) subunit 1 (435 aa).

This sequence belongs to the GcvP family. N-terminal subunit subfamily. As to quaternary structure, the glycine cleavage system is composed of four proteins: P, T, L and H. In this organism, the P 'protein' is a heterodimer of two subunits.

The catalysed reaction is N(6)-[(R)-lipoyl]-L-lysyl-[glycine-cleavage complex H protein] + glycine + H(+) = N(6)-[(R)-S(8)-aminomethyldihydrolipoyl]-L-lysyl-[glycine-cleavage complex H protein] + CO2. The glycine cleavage system catalyzes the degradation of glycine. The P protein binds the alpha-amino group of glycine through its pyridoxal phosphate cofactor; CO(2) is released and the remaining methylamine moiety is then transferred to the lipoamide cofactor of the H protein. The chain is Probable glycine dehydrogenase (decarboxylating) subunit 1 from Coprothermobacter proteolyticus (strain ATCC 35245 / DSM 5265 / OCM 4 / BT).